The chain runs to 197 residues: Protein FAM219B (197 aa).

2 disordered regions span residues Met-1 to His-77 and Asp-117 to Ala-142. A phosphoserine mark is found at Ser-14, Ser-125, and Ser-127.

The protein belongs to the FAM219 family.

The polypeptide is Protein FAM219B (Fam219b) (Mus musculus (Mouse)).